The primary structure comprises 245 residues: 2-C-methyl-D-erythritol 4-phosphate cytidylyltransferase (245 aa).

This sequence belongs to the IspD/TarI cytidylyltransferase family. IspD subfamily.

The catalysed reaction is 2-C-methyl-D-erythritol 4-phosphate + CTP + H(+) = 4-CDP-2-C-methyl-D-erythritol + diphosphate. It functions in the pathway isoprenoid biosynthesis; isopentenyl diphosphate biosynthesis via DXP pathway; isopentenyl diphosphate from 1-deoxy-D-xylulose 5-phosphate: step 2/6. Its function is as follows. Catalyzes the formation of 4-diphosphocytidyl-2-C-methyl-D-erythritol from CTP and 2-C-methyl-D-erythritol 4-phosphate (MEP). This Chloroherpeton thalassium (strain ATCC 35110 / GB-78) protein is 2-C-methyl-D-erythritol 4-phosphate cytidylyltransferase.